We begin with the raw amino-acid sequence, 216 residues long: Eukaryotic translation initiation factor isoform 4E-2 (216 aa).

Residues 1-23 (MAEVEAPATAVEAPAAAVATTTP) are disordered. Residues cysteine 113 and cysteine 152 are joined by a disulfide bond.

This sequence belongs to the eukaryotic initiation factor 4E family. EIF4F is a multi-subunit complex, the composition of which varies with external and internal environmental conditions. It is composed of at least EIF4A, EIF4E and EIF4G. EIF4E is also known to interact with other partners. In higher plants two isoforms of EIF4F have been identified, named isoform EIF4F and isoform EIF(iso)4F. Isoform EIF4F has subunits p220 and p26, whereas isoform EIF(iso)4F has subunits p82 and p28. According to the redox status, the Cys-113-Cys-152 disulfide bridge may have a role in regulating protein function by affecting its ability to bind capped mRNA.

Recognizes and binds the 7-methylguanosine-containing mRNA cap during an early step in the initiation of protein synthesis and facilitates ribosome binding by inducing the unwinding of the mRNAs secondary structures. In Zea mays (Maize), this protein is Eukaryotic translation initiation factor isoform 4E-2.